The following is a 628-amino-acid chain: Propionate--CoA ligase (628 aa).

Belongs to the ATP-dependent AMP-binding enzyme family.

The catalysed reaction is propanoate + ATP + CoA = propanoyl-CoA + AMP + diphosphate. The protein operates within organic acid metabolism; propanoate degradation. Its function is as follows. Catalyzes the synthesis of propionyl-CoA from propionate and CoA. Also converts acetate to acetyl-CoA but with a lower specific activity. The sequence is that of Propionate--CoA ligase (prpE) from Escherichia coli (strain K12).